A 262-amino-acid chain; its full sequence is Small ribosomal subunit protein mS23 (262 aa).

Residues 211–262 (SGQSDEAPEGEGSDMSAGEYDMAVEELAGQGSIPNTPQSTVVPEGTSAPAHA) are disordered. Residues 242–251 (SIPNTPQSTV) show a composition bias toward polar residues.

Belongs to the mitochondrion-specific ribosomal protein mS23 family. Component of the mitochondrial small ribosomal subunit.

It localises to the mitochondrion. The sequence is that of Small ribosomal subunit protein mS23 (RSM25) from Phaeosphaeria nodorum (strain SN15 / ATCC MYA-4574 / FGSC 10173) (Glume blotch fungus).